The chain runs to 311 residues: Aspartate carbamoyltransferase catalytic subunit (311 aa).

Carbamoyl phosphate contacts are provided by R58 and T59. K86 contributes to the L-aspartate binding site. Positions 108, 136, and 139 each coordinate carbamoyl phosphate. Positions 169 and 223 each coordinate L-aspartate. Residues G264 and P265 each contribute to the carbamoyl phosphate site.

It belongs to the aspartate/ornithine carbamoyltransferase superfamily. ATCase family. As to quaternary structure, heterododecamer (2C3:3R2) of six catalytic PyrB chains organized as two trimers (C3), and six regulatory PyrI chains organized as three dimers (R2).

It carries out the reaction carbamoyl phosphate + L-aspartate = N-carbamoyl-L-aspartate + phosphate + H(+). It functions in the pathway pyrimidine metabolism; UMP biosynthesis via de novo pathway; (S)-dihydroorotate from bicarbonate: step 2/3. Functionally, catalyzes the condensation of carbamoyl phosphate and aspartate to form carbamoyl aspartate and inorganic phosphate, the committed step in the de novo pyrimidine nucleotide biosynthesis pathway. This is Aspartate carbamoyltransferase catalytic subunit from Pelodictyon phaeoclathratiforme (strain DSM 5477 / BU-1).